The primary structure comprises 234 residues: Glucosamine-6-phosphate deaminase (234 aa).

The Proton acceptor; for enolization step role is filled by Asp63. The active-site For ring-opening step is the Asn129. His131 serves as the catalytic Proton acceptor; for ring-opening step. Glu136 acts as the For ring-opening step in catalysis.

It belongs to the glucosamine/galactosamine-6-phosphate isomerase family. NagB subfamily.

The catalysed reaction is alpha-D-glucosamine 6-phosphate + H2O = beta-D-fructose 6-phosphate + NH4(+). It functions in the pathway amino-sugar metabolism; N-acetylneuraminate degradation; D-fructose 6-phosphate from N-acetylneuraminate: step 5/5. Its function is as follows. Catalyzes the reversible isomerization-deamination of glucosamine 6-phosphate (GlcN6P) to form fructose 6-phosphate (Fru6P) and ammonium ion. In Listeria monocytogenes serotype 4b (strain CLIP80459), this protein is Glucosamine-6-phosphate deaminase.